Consider the following 436-residue polypeptide: GTPase Obg (436 aa).

Positions 2 to 160 (SMFLDTAKIQ…RELLLELKVL (159 aa)) constitute an Obg domain. Residues 161 to 338 (ADVGLVGFPS…LLDATAELLD (178 aa)) form the OBG-type G domain. Residues 167–174 (GFPSVGKS), 192–196 (FTTIV), 214–217 (DLPG), 284–287 (NKMD), and 319–321 (SSL) contribute to the GTP site. Positions 174 and 194 each coordinate Mg(2+). Residues 358-436 (GFDEEAPAFE…IGKFEFEFVD (79 aa)) enclose the OCT domain.

The protein belongs to the TRAFAC class OBG-HflX-like GTPase superfamily. OBG GTPase family. Monomer. It depends on Mg(2+) as a cofactor.

The protein resides in the cytoplasm. In terms of biological role, an essential GTPase which binds GTP, GDP and possibly (p)ppGpp with moderate affinity, with high nucleotide exchange rates and a fairly low GTP hydrolysis rate. Plays a role in control of the cell cycle, stress response, ribosome biogenesis and in those bacteria that undergo differentiation, in morphogenesis control. This chain is GTPase Obg, found in Streptococcus sanguinis (strain SK36).